Here is a 472-residue protein sequence, read N- to C-terminus: UDP-glycosyltransferase 708G2 (472 aa).

The active-site Proton acceptor is the H23. H23 provides a ligand contact to an anthocyanidin. D117 serves as the catalytic Charge relay. Residue T140 coordinates UDP-alpha-D-glucose. The UDP stretch occupies residues 283 to 284 (SR). UDP-alpha-D-glucose-binding residues include V346, Q348, H363, W366, N367, S368, and E371. An anthocyanidin is bound at residue G386. The UDP-alpha-D-glucose site is built by D387 and Q388.

The protein belongs to the UDP-glycosyltransferase family. In terms of tissue distribution, expressed at low levels in leaves, flowers and immature leaves.

It carries out the reaction a 3'-hydro-2'-hydroxy-beta-oxodihydrochalcone + UDP-alpha-D-glucose = a 3'-(beta-D-glucopyranosyl)-2'-hydroxy-beta-oxodihydrochalcone + UDP + H(+). Functionally, UDP-glucose-dependent glucosyltransferase catalyzing the C-glucosylation of 2-hydroxyflavanones (2-hydroxylnaringenin and 2-hydroxypinocembrin) and phloretin. No activity with flavanones, flavones or flavonols. Exhibits C-glucosylation activity toward 2-phenyl-2',4',6'-trihydroxyacetophenone. Can use UDP-xylose as sugar donor, but catalytic efficiency is much lower toward UDP-xylose than toward UDP-glucose. The protein is UDP-glycosyltransferase 708G2 (UGT708G2) of Citrus unshiu (Satsuma mandarin).